The following is a 633-amino-acid chain: RpoH suppressor (633 aa).

The 400-residue stretch at 11–410 folds into the PNPLA domain; sequence LVMKGGITSG…SSNFPIHLFD (400 aa). 3 helical membrane-spanning segments follow: residues 38 to 58, 133 to 153, and 159 to 179; these read NIGG…AAVG, IAPV…YAVG, and IAAA…FAVL. The GXSXG motif lies at 41 to 45; it reads GTSAG. Catalysis depends on Ser-43, which acts as the Nucleophile. Residues 342-380 are disordered; it reads ARRESLPGSDGENEAEDTTSDEDEQKTVLDSTEALTTGG. The segment covering 352–365 has biased composition (acidic residues); it reads GENEAEDTTSDEDE. Catalysis depends on Asp-397, which acts as the Proton acceptor. Positions 397 to 399 match the DGA/G motif; it reads DGG. The disordered stretch occupies residues 605 to 624; it reads EGEKWSGEGPDLTKTAPRPL.

The protein resides in the cell membrane. In terms of biological role, this protein is non-essential for R.meliloti growth, but induces a heat-shock response in temperature-sensitive E.coli K165 by elevating levels of sigma 32 (mechanism unknown). This chain is RpoH suppressor (suhR), found in Rhizobium meliloti (strain 1021) (Ensifer meliloti).